Here is a 427-residue protein sequence, read N- to C-terminus: 3-phosphoshikimate 1-carboxyvinyltransferase (427 aa).

3-phosphoshikimate is bound by residues Lys20, Ser21, and Arg25. Lys20 provides a ligand contact to phosphoenolpyruvate. Positions 92 and 120 each coordinate phosphoenolpyruvate. 4 residues coordinate 3-phosphoshikimate: Ser166, Gln168, Asp312, and Lys339. Gln168 provides a ligand contact to phosphoenolpyruvate. Asp312 (proton acceptor) is an active-site residue. Phosphoenolpyruvate contacts are provided by Arg343 and Arg385.

The protein belongs to the EPSP synthase family. As to quaternary structure, monomer.

Its subcellular location is the cytoplasm. The catalysed reaction is 3-phosphoshikimate + phosphoenolpyruvate = 5-O-(1-carboxyvinyl)-3-phosphoshikimate + phosphate. The protein operates within metabolic intermediate biosynthesis; chorismate biosynthesis; chorismate from D-erythrose 4-phosphate and phosphoenolpyruvate: step 6/7. Catalyzes the transfer of the enolpyruvyl moiety of phosphoenolpyruvate (PEP) to the 5-hydroxyl of shikimate-3-phosphate (S3P) to produce enolpyruvyl shikimate-3-phosphate and inorganic phosphate. This Streptococcus gordonii (strain Challis / ATCC 35105 / BCRC 15272 / CH1 / DL1 / V288) protein is 3-phosphoshikimate 1-carboxyvinyltransferase.